Consider the following 107-residue polypeptide: uncharacterized protein (107 aa).

A helical membrane pass occupies residues 12 to 32 (IILNIFLALLLVYFIFHCIYG).

It localises to the membrane. This is an uncharacterized protein from Rickettsia prowazekii (strain Madrid E).